The chain runs to 726 residues: Catalase-peroxidase 1 (726 aa).

The interval 1 to 33 (MSTSDDIHNTTATGKCPFHQGGHDQSAGAGTTT) is disordered. The tryptophyl-tyrosyl-methioninium (Trp-Tyr) (with M-252) cross-link spans 105–226 (WHGAGTYRSI…LGATEMGLIY (122 aa)). Catalysis depends on His106, which acts as the Proton acceptor. Residues 226–252 (YVNPEGPDHSGEPLSAAAAIRATFGNM) constitute a cross-link (tryptophyl-tyrosyl-methioninium (Tyr-Met) (with W-105)). His267 contributes to the heme b binding site.

It belongs to the peroxidase family. Peroxidase/catalase subfamily. Homodimer or homotetramer. Requires heme b as cofactor. Formation of the three residue Trp-Tyr-Met cross-link is important for the catalase, but not the peroxidase activity of the enzyme.

The enzyme catalyses H2O2 + AH2 = A + 2 H2O. The catalysed reaction is 2 H2O2 = O2 + 2 H2O. Functionally, bifunctional enzyme with both catalase and broad-spectrum peroxidase activity. This Escherichia coli O157:H7 protein is Catalase-peroxidase 1.